Consider the following 176-residue polypeptide: Cytochrome b (176 aa).

A run of 3 helical transmembrane segments spans residues 33-53, 77-98, and 113-133; these read FGSL…FLAM, WVLR…YLHV, and WNMG…GYVL. Heme b-binding residues include His-83 and His-97.

It belongs to the cytochrome b family. The cytochrome bc1 complex contains 11 subunits: 3 respiratory subunits (MT-CYB, CYC1 and UQCRFS1), 2 core proteins (UQCRC1 and UQCRC2) and 6 low-molecular weight proteins (UQCRH/QCR6, UQCRB/QCR7, UQCRQ/QCR8, UQCR10/QCR9, UQCR11/QCR10 and a cleavage product of UQCRFS1). This cytochrome bc1 complex then forms a dimer. Requires heme b as cofactor.

Its subcellular location is the mitochondrion inner membrane. In terms of biological role, component of the ubiquinol-cytochrome c reductase complex (complex III or cytochrome b-c1 complex) that is part of the mitochondrial respiratory chain. The b-c1 complex mediates electron transfer from ubiquinol to cytochrome c. Contributes to the generation of a proton gradient across the mitochondrial membrane that is then used for ATP synthesis. The chain is Cytochrome b (MT-CYB) from Nycticeius humeralis (Evening bat).